A 178-amino-acid polypeptide reads, in one-letter code: NADH-ubiquinone oxidoreductase chain 6 (178 aa).

5 helical membrane-spanning segments follow: residues 1 to 21 (MMTY…VGFS), 25 to 45 (SPIY…GIVL), 48 to 68 (GGSF…LVVF), 89 to 109 (VLLT…YLLL), and 152 to 172 (YGYW…IVVM).

It belongs to the complex I subunit 6 family.

The protein resides in the mitochondrion membrane. The catalysed reaction is a ubiquinone + NADH + 5 H(+)(in) = a ubiquinol + NAD(+) + 4 H(+)(out). In terms of biological role, core subunit of the mitochondrial membrane respiratory chain NADH dehydrogenase (Complex I) that is believed to belong to the minimal assembly required for catalysis. Complex I functions in the transfer of electrons from NADH to the respiratory chain. The immediate electron acceptor for the enzyme is believed to be ubiquinone. The chain is NADH-ubiquinone oxidoreductase chain 6 (MT-ND6) from Pseudosoriculus fumidus (Taiwanese brown-toothed shrew).